Here is a 166-residue protein sequence, read N- to C-terminus: Signal peptidase complex catalytic subunit SEC11 (166 aa).

Over methionine 1–glutamine 9 the chain is Cytoplasmic. The chain crosses the membrane as a helical; Signal-anchor for type II membrane protein span at residues phenylalanine 10–isoleucine 30. Residues alanine 31–glutamate 166 lie on the Lumenal side of the membrane. Active-site charge relay system residues include serine 44, histidine 83, and aspartate 108. The C-terminal short (CTS) helix stretch occupies residues glycine 152–phenylalanine 163.

Belongs to the peptidase S26B family. In terms of assembly, component of the signal peptidase complex (SPC) composed of a catalytic subunit SEC11 and three accessory subunits SPC1, SPC2 and SPC3. The complex induces a local thinning of the ER membrane which is used to measure the length of the signal peptide (SP) h-region of protein substrates. This ensures the selectivity of the complex towards h-regions shorter than 18-20 amino acids. SPC associates with the translocon complex.

It is found in the endoplasmic reticulum membrane. The catalysed reaction is Cleavage of hydrophobic, N-terminal signal or leader sequences from secreted and periplasmic proteins.. Its function is as follows. Catalytic component of the signal peptidase complex (SPC) which catalyzes the cleavage of N-terminal signal sequences from nascent proteins as they are translocated into the lumen of the endoplasmic reticulum. Specifically cleaves N-terminal signal peptides that contain a hydrophobic alpha-helix (h-region) shorter than 18-20 amino acids. This is Signal peptidase complex catalytic subunit SEC11 (SEC11) from Candida dubliniensis (strain CD36 / ATCC MYA-646 / CBS 7987 / NCPF 3949 / NRRL Y-17841) (Yeast).